Reading from the N-terminus, the 404-residue chain is CD209 antigen (404 aa).

Residues 1–37 are Cytoplasmic-facing; it reads MSDSKEPRLQQLDLLEEEQLGGVGFRQTRGYKSLAGC. 3 short sequence motifs (endocytosis signal) span residues 14-15, 16-18, and 31-34; these read LL, EEE, and YKSL. The chain crosses the membrane as a helical; Signal-anchor for type II membrane protein span at residues 38-58; the sequence is LGHGPLVLQLLSFTLLAGLLV. Residues 59–404 are Extracellular-facing; that stretch reads QVSKVPSSLS…APTTPNPPPA (346 aa). Asn80 carries N-linked (GlcNAc...) asparagine glycosylation. 7 consecutive repeat copies span residues 96–118, 119–141, 142–164, 165–187, 188–210, 211–233, and 234–257. The segment at 96–257 is 7 X approximate tandem repeats; that stretch reads KQQEIYQELT…AVERLCHPCP (162 aa). Disulfide bonds link Cys256–Cys267, Cys284–Cys377, and Cys356–Cys369. The C-type lectin domain maps to 263–378; it reads FQGNCYFMSN…CNLAKFWICK (116 aa). The Ca(2+) site is built by Glu347, Asn349, Ile351, Glu354, Asn365, and Asp366. The segment at 382–404 is disordered; the sequence is ASCSGDEERLLSPAPTTPNPPPA.

As to quaternary structure, homotetramer. Interacts with C1QBP; the interaction is indicative for a C1q:C1QBP:CD209 signaling complex. Interacts with ICAM2 and ICAM3 by binding to mannose-like carbohydrates. Interacts (via C-type lectin domain) with CEACAM1 (via Lewis X moieties); this interaction is regulated by the glycosylation pattern of CEACAM1 on cell types and regulates contact between dendritic cells and neutrophils.

The protein localises to the membrane. Pathogen-recognition receptor expressed on the surface of immature dendritic cells (DCs) and involved in initiation of primary immune response. Thought to mediate the endocytosis of pathogens which are subsequently degraded in lysosomal compartments. The receptor returns to the cell membrane surface and the pathogen-derived antigens are presented to resting T-cells via MHC class II proteins to initiate the adaptive immune response. Probably recognizes in a calcium-dependent manner high mannose N-linked oligosaccharides in a variety of pathogen antigens. In terms of biological role, on DCs it is a high affinity receptor for ICAM2 and ICAM3 by binding to mannose-like carbohydrates. May act as a DC rolling receptor that mediates transendothelial migration of DC presursors from blood to tissues by binding endothelial ICAM2. Seems to regulate DC-induced T-cell proliferation by binding to ICAM3 on T-cells in the immunological synapse formed between DC and T-cells. The sequence is that of CD209 antigen (CD209) from Macaca mulatta (Rhesus macaque).